The chain runs to 504 residues: Maturase K (504 aa).

The protein belongs to the intron maturase 2 family. MatK subfamily.

The protein resides in the plastid. Its subcellular location is the chloroplast. In terms of biological role, usually encoded in the trnK tRNA gene intron. Probably assists in splicing its own and other chloroplast group II introns. The sequence is that of Maturase K from Mentzelia laevicaulis (Blazing star).